Reading from the N-terminus, the 431-residue chain is Adenylosuccinate synthetase (431 aa).

GTP is bound by residues 13–19 (GDEGKGK) and 41–43 (GHT). Asp-14 (proton acceptor) is an active-site residue. Mg(2+) is bound by residues Asp-14 and Gly-41. Residues 14-17 (DEGK), 39-42 (NAGH), Thr-130, Arg-144, Gln-225, Thr-240, and Arg-304 each bind IMP. His-42 serves as the catalytic Proton donor. 300–306 (ATTGRQR) lines the substrate pocket. GTP contacts are provided by residues Arg-306, 332 to 334 (KLD), and 414 to 416 (STG).

This sequence belongs to the adenylosuccinate synthetase family. In terms of assembly, homodimer. It depends on Mg(2+) as a cofactor.

The protein resides in the cytoplasm. It catalyses the reaction IMP + L-aspartate + GTP = N(6)-(1,2-dicarboxyethyl)-AMP + GDP + phosphate + 2 H(+). It participates in purine metabolism; AMP biosynthesis via de novo pathway; AMP from IMP: step 1/2. In terms of biological role, plays an important role in the de novo pathway of purine nucleotide biosynthesis. Catalyzes the first committed step in the biosynthesis of AMP from IMP. In Saccharophagus degradans (strain 2-40 / ATCC 43961 / DSM 17024), this protein is Adenylosuccinate synthetase.